Consider the following 450-residue polypeptide: UDP-N-acetylmuramoylalanine--D-glutamate ligase (450 aa).

An ATP-binding site is contributed by Gly119–Thr125.

This sequence belongs to the MurCDEF family.

Its subcellular location is the cytoplasm. It catalyses the reaction UDP-N-acetyl-alpha-D-muramoyl-L-alanine + D-glutamate + ATP = UDP-N-acetyl-alpha-D-muramoyl-L-alanyl-D-glutamate + ADP + phosphate + H(+). It functions in the pathway cell wall biogenesis; peptidoglycan biosynthesis. Functionally, cell wall formation. Catalyzes the addition of glutamate to the nucleotide precursor UDP-N-acetylmuramoyl-L-alanine (UMA). The protein is UDP-N-acetylmuramoylalanine--D-glutamate ligase of Streptococcus pneumoniae (strain ATCC 700669 / Spain 23F-1).